The primary structure comprises 1044 residues: Isoleucine--tRNA ligase (1044 aa).

The short motif at 48 to 58 is the 'HIGH' region element; sequence PFATGLPHFGH. Residues 594–598 carry the 'KMSKS' region motif; the sequence is KMSKS. Lysine 597 contributes to the ATP binding site.

This sequence belongs to the class-I aminoacyl-tRNA synthetase family. IleS type 2 subfamily. As to quaternary structure, monomer. It depends on Zn(2+) as a cofactor.

The protein localises to the cytoplasm. It carries out the reaction tRNA(Ile) + L-isoleucine + ATP = L-isoleucyl-tRNA(Ile) + AMP + diphosphate. Its function is as follows. Catalyzes the attachment of isoleucine to tRNA(Ile). As IleRS can inadvertently accommodate and process structurally similar amino acids such as valine, to avoid such errors it has two additional distinct tRNA(Ile)-dependent editing activities. One activity is designated as 'pretransfer' editing and involves the hydrolysis of activated Val-AMP. The other activity is designated 'posttransfer' editing and involves deacylation of mischarged Val-tRNA(Ile). This Borrelia hermsii (strain HS1 / DAH) protein is Isoleucine--tRNA ligase.